The sequence spans 138 residues: Rubber elongation factor protein (138 aa).

Alanine 2 is modified (N-acetylalanine).

The protein belongs to the REF/SRPP family. In terms of assembly, in solution, able to form amyloid fibers and aggregates rich in beta-sheets. Interaction with membrane stabilizes the protein, inhibiting the amyloid state and aggregation. In terms of processing, not glycosylated. As to expression, localized in all laticifer layers.

Its subcellular location is the cytoplasm. In terms of biological role, may be part of the rubber biosynthesis machinery. Plays a role in rubber elongation. The chain is Rubber elongation factor protein from Hevea brasiliensis (Para rubber tree).